A 251-amino-acid polypeptide reads, in one-letter code: Hydroxyacylglutathione hydrolase (251 aa).

Positions 53, 55, 57, 58, 109, 126, and 164 each coordinate Zn(2+).

The protein belongs to the metallo-beta-lactamase superfamily. Glyoxalase II family. Monomer. It depends on Zn(2+) as a cofactor.

It catalyses the reaction an S-(2-hydroxyacyl)glutathione + H2O = a 2-hydroxy carboxylate + glutathione + H(+). It functions in the pathway secondary metabolite metabolism; methylglyoxal degradation; (R)-lactate from methylglyoxal: step 2/2. Its function is as follows. Thiolesterase that catalyzes the hydrolysis of S-D-lactoyl-glutathione to form glutathione and D-lactic acid. The sequence is that of Hydroxyacylglutathione hydrolase from Wigglesworthia glossinidia brevipalpis.